A 452-amino-acid chain; its full sequence is Probable diguanylate cyclase DgcT (452 aa).

At 1 to 7 (MEKDYLR) the chain is on the cytoplasmic side. Residues 8–28 (ISSTVLVSLLFGLALVLVNSW) traverse the membrane as a helical segment. The Periplasmic portion of the chain corresponds to 29–45 (FNQPGVEEVVPRSTYLM). The chain crosses the membrane as a helical span at residues 46-66 (VMIALFFIDTVAFIFMQLYFI). The Cytoplasmic portion of the chain corresponds to 67-74 (YDRRQFSN). Residues 75 to 95 (CVLSLAFLSCLIYFVITVIII) form a helical membrane-spanning segment. Topologically, residues 96 to 111 (QQIIEERLTSSVVQND) are periplasmic. The chain crosses the membrane as a helical span at residues 112 to 132 (IAIYYLFRQMSLCILIFLALV). At 133-148 (NKVSENTKQRNLFSKK) the chain is on the cytoplasmic side. Residues 149-169 (MTLCISLFFVFGGPIVAHILS) form a helical membrane-spanning segment. The Periplasmic segment spans residues 170–195 (SHYESYNLHIAELTNENGQVVWKASY). A helical membrane pass occupies residues 196–216 (VTIMIFMWLTLLSVNLYFNGL). The Cytoplasmic segment spans residues 217–219 (RYD). A helical transmembrane segment spans residues 220-240 (IWNGVTVIAFCAVLYNISLLF). Over 241 to 254 (MSRYSVSTWYISRT) the chain is Periplasmic. The chain crosses the membrane as a helical span at residues 255-275 (IEVVSKLTVMVIFMCHIFSAL). Over 276–452 (RVTKNIAHRD…RDVVNFCESP (177 aa)) the chain is Cytoplasmic. Positions 310 to 445 (TPYCVMIMDI…GRNKVVVRDV (136 aa)) constitute a GGDEF domain. The Mg(2+) site is built by Asp-318 and Ile-319. Asn-326, His-331, and Asp-335 together coordinate substrate. Mg(2+) is bound at residue Glu-361. Residue Glu-361 is the Proton acceptor of the active site. Arg-381 is a binding site for substrate.

In terms of assembly, homodimer. The cofactor is Mg(2+).

The protein localises to the cell inner membrane. The catalysed reaction is 2 GTP = 3',3'-c-di-GMP + 2 diphosphate. It participates in purine metabolism; 3',5'-cyclic di-GMP biosynthesis. Probably catalyzes the synthesis of cyclic-di-GMP (c-di-GMP) via the condensation of 2 GTP molecules. Overexpression leads to a strong repression of swimming; swimming returns to normal when residues 359-360 are both mutated to Ala. Overexpression also leads to a 20-fold increase in c-di-GMP levels in vivo. Cyclic-di-GMP is a second messenger which controls cell surface-associated traits in bacteria. This chain is Probable diguanylate cyclase DgcT, found in Escherichia coli (strain K12).